Here is a 267-residue protein sequence, read N- to C-terminus: L-aspartate dehydrogenase 2 (267 aa).

A123 and N189 together coordinate NAD(+). The active site involves H219.

Belongs to the L-aspartate dehydrogenase family.

It catalyses the reaction L-aspartate + NADP(+) + H2O = oxaloacetate + NH4(+) + NADPH + H(+). It carries out the reaction L-aspartate + NAD(+) + H2O = oxaloacetate + NH4(+) + NADH + H(+). The protein operates within cofactor biosynthesis; NAD(+) biosynthesis; iminoaspartate from L-aspartate (dehydrogenase route): step 1/1. Specifically catalyzes the NAD or NADP-dependent dehydrogenation of L-aspartate to iminoaspartate. In Bordetella bronchiseptica (strain ATCC BAA-588 / NCTC 13252 / RB50) (Alcaligenes bronchisepticus), this protein is L-aspartate dehydrogenase 2.